The chain runs to 76 residues: Theta defensin subunit C (76 aa).

A signal peptide spans 1 to 22 (MRTFAFLTAMLLLVALHAQAEA). Positions 23–64 (RQARADEAAIQEQPGADDQGMAHSFTRNESAVLPLSESERGL) are excised as a propeptide. A Cyclopeptide (Arg-Cys) (interchain with C-73 in subunit A); in form BTD-4 cross-link involves residue arginine 65. Cysteine 68 and cysteine 73 are oxidised to a cystine. Residue cysteine 73 forms a Cyclopeptide (Cys-Arg) (interchain with R-65 in subunit A); in form BTD-4 linkage. Positions 74–76 (RLL) are excised as a propeptide.

Belongs to the alpha-defensin family. Theta subfamily. BTD-4 is a cyclic heterodimer composed of subunits A and C; disulfide-linked. Post-translationally, forms a cyclic peptide with subunit A (BTD-4). An additional intersubunit disulfide bond is formed.

In terms of biological role, BTD-4 has antimicrobial activity against the Gram-negative bacterium E.coli ML35, the Gram-positive bacterium S.aureus 502a, and the fungus C.albicans 16820. This Papio anubis (Olive baboon) protein is Theta defensin subunit C (BTDC).